The sequence spans 389 residues: Formate-dependent phosphoribosylglycinamide formyltransferase (389 aa).

N(1)-(5-phospho-beta-D-ribosyl)glycinamide-binding positions include 15 to 16 (EL) and glutamate 75. ATP-binding positions include arginine 107, lysine 148, 153–158 (SSGKGQ), 188–191 (EEFL), and glutamate 196. Positions 112 to 302 (NLAAGELGLR…EFDLHLRAVL (191 aa)) constitute an ATP-grasp domain. Mg(2+) is bound by residues glutamate 261 and glutamate 273. N(1)-(5-phospho-beta-D-ribosyl)glycinamide-binding positions include aspartate 280, lysine 350, and 357–358 (RR).

It belongs to the PurK/PurT family. Homodimer.

The enzyme catalyses N(1)-(5-phospho-beta-D-ribosyl)glycinamide + formate + ATP = N(2)-formyl-N(1)-(5-phospho-beta-D-ribosyl)glycinamide + ADP + phosphate + H(+). The protein operates within purine metabolism; IMP biosynthesis via de novo pathway; N(2)-formyl-N(1)-(5-phospho-D-ribosyl)glycinamide from N(1)-(5-phospho-D-ribosyl)glycinamide (formate route): step 1/1. Its function is as follows. Involved in the de novo purine biosynthesis. Catalyzes the transfer of formate to 5-phospho-ribosyl-glycinamide (GAR), producing 5-phospho-ribosyl-N-formylglycinamide (FGAR). Formate is provided by PurU via hydrolysis of 10-formyl-tetrahydrofolate. The protein is Formate-dependent phosphoribosylglycinamide formyltransferase of Synechococcus sp. (strain CC9311).